A 51-amino-acid polypeptide reads, in one-letter code: Insulin (51 aa).

Cystine bridges form between Cys-7-Cys-37, Cys-19-Cys-50, and Cys-36-Cys-41.

The protein belongs to the insulin family. Heterodimer of a B chain and an A chain linked by two disulfide bonds.

The protein resides in the secreted. Its function is as follows. Insulin decreases blood glucose concentration. It increases cell permeability to monosaccharides, amino acids and fatty acids. It accelerates glycolysis, the pentose phosphate cycle, and glycogen synthesis in liver. The sequence is that of Insulin (INS) from Capra hircus (Goat).